Reading from the N-terminus, the 328-residue chain is Glycerol-3-phosphate dehydrogenase [NAD(P)+] (328 aa).

Positions 15, 35, and 108 each coordinate NADPH. Lysine 108, glycine 136, and serine 138 together coordinate sn-glycerol 3-phosphate. Alanine 140 contacts NADPH. Lysine 191, aspartate 244, serine 254, arginine 255, and asparagine 256 together coordinate sn-glycerol 3-phosphate. The active-site Proton acceptor is the lysine 191. Arginine 255 is an NADPH binding site. Residues leucine 275 and glutamate 277 each contribute to the NADPH site.

It belongs to the NAD-dependent glycerol-3-phosphate dehydrogenase family.

The protein resides in the cytoplasm. The enzyme catalyses sn-glycerol 3-phosphate + NAD(+) = dihydroxyacetone phosphate + NADH + H(+). It catalyses the reaction sn-glycerol 3-phosphate + NADP(+) = dihydroxyacetone phosphate + NADPH + H(+). Its pathway is membrane lipid metabolism; glycerophospholipid metabolism. Catalyzes the reduction of the glycolytic intermediate dihydroxyacetone phosphate (DHAP) to sn-glycerol 3-phosphate (G3P), the key precursor for phospholipid synthesis. In Azorhizobium caulinodans (strain ATCC 43989 / DSM 5975 / JCM 20966 / LMG 6465 / NBRC 14845 / NCIMB 13405 / ORS 571), this protein is Glycerol-3-phosphate dehydrogenase [NAD(P)+].